A 199-amino-acid chain; its full sequence is uncharacterized protein (199 aa).

Residues 71-104 (RANATNKLTVIAEQIQHLQEQARKVLEDARRDAD) adopt a coiled-coil conformation.

This is an uncharacterized protein from Mus musculus (Mouse).